Reading from the N-terminus, the 268-residue chain is MSGGIEALELKEDDIRLMVAAKVHLGSTNANYQMQQYVYDRNDEGNHIIHLNKTWEKLLLAARAICAIENPADVVIIGGQPTWQRGALKFGHYTGTTSVPGRFTPGAFTNQIQSGFKEPRLLIVCDPKGDHQPVREGSAVNIPVIGFCNTDSPLQCVDIGIPCNNDKYSIALMLWMLAREVRRIWGLDPRSQPGDVIMDLFLMREHVDEPPEGPEGEAQEPPFEQGKFDAAEAEAPEWPAESVSPRCWNAGARFRWCWWQLDSLRCKG.

Residues 161-179 (IPCNNDKYSIALMLWMLAR) form a laminin-binding region.

The protein belongs to the universal ribosomal protein uS2 family. As to quaternary structure, component of the small ribosomal subunit. Mature ribosomes consist of a small (40S) and a large (60S) subunit. The 40S subunit contains about 33 different proteins and 1 molecule of RNA (18S). The 60S subunit contains about 49 different proteins and 3 molecules of RNA (28S, 5.8S and 5S). Interacts with ribosomal protein S21.

Its subcellular location is the cytoplasm. Its function is as follows. Required for the assembly and/or stability of the 40S ribosomal subunit. Required for the processing of the 20S rRNA-precursor to mature 18S rRNA in a late step of the maturation of 40S ribosomal subunits. Binds laminin. The chain is Small ribosomal subunit protein uS2 (egmo3) from Echinococcus granulosus (Hydatid tapeworm).